The primary structure comprises 229 residues: MAKKGKKYQDALKQIDANKVYTAEEAVELAKKIDFAKFDATVEVAFRLGVDPKKADQQIRGAVVLPNGTGKTQRVLVFAKGEKAKEAEAAGADYVGESEFVEKINQGWFEFDVIVATPDMMGEVGKLGRVLGPKGLMPNPKTGTVTMDVTKAVNEIKAGKVEYRVDKAGNVHAAIGKVSFDAAKLVENFRTVNDVLQKAKPAAAKGTYVKNLSVTTTFGPGIKVDPASL.

It belongs to the universal ribosomal protein uL1 family. In terms of assembly, part of the 50S ribosomal subunit.

Functionally, binds directly to 23S rRNA. The L1 stalk is quite mobile in the ribosome, and is involved in E site tRNA release. In terms of biological role, protein L1 is also a translational repressor protein, it controls the translation of the L11 operon by binding to its mRNA. This chain is Large ribosomal subunit protein uL1, found in Listeria innocua serovar 6a (strain ATCC BAA-680 / CLIP 11262).